The following is a 120-amino-acid chain: Ribosome-binding factor A (120 aa).

The protein belongs to the RbfA family. In terms of assembly, monomer. Binds 30S ribosomal subunits, but not 50S ribosomal subunits or 70S ribosomes.

It localises to the cytoplasm. Functionally, one of several proteins that assist in the late maturation steps of the functional core of the 30S ribosomal subunit. Associates with free 30S ribosomal subunits (but not with 30S subunits that are part of 70S ribosomes or polysomes). Required for efficient processing of 16S rRNA. May interact with the 5'-terminal helix region of 16S rRNA. In Borreliella burgdorferi (strain ATCC 35210 / DSM 4680 / CIP 102532 / B31) (Borrelia burgdorferi), this protein is Ribosome-binding factor A.